A 217-amino-acid polypeptide reads, in one-letter code: MEVENEAHCCPGSSSGGSREYKVVMLGAGGVGKSAVTMQFISHQFPDYHDPTIEDAYKTQVRIDNEPAYLDILDTAGQAEFTAMREQYMRGGEGFIICYSVTDRQSFQEAAKFKELIFQVRHTYEIPLVLVGNKIDLEQFRQVSTEEGMNLARDYNCAFFETSAALRFGIDDAFQGLVREIRRKESMLSLVERKLKRKDSLWKKIKASLKKKRENML.

GTP-binding positions include 27 to 34 (GAGGVGKS), 74 to 78 (DTAGQ), and 133 to 136 (NKID).

The protein belongs to the small GTPase superfamily. Ras family. In terms of assembly, interacts with PLXNB3. Interacts with AFDN, the C-terminal domain of RALGDS and RLF, but not with RIN1 and PIK3CA. RLF binds exclusively to the active GTP-bound form. Binds calmodulin. Interacts with POU4F1 (via N-terminus); the interaction controls POU4F1 transactivation activity on some neuronal target genes. In terms of tissue distribution, expressed in ganglion cell layer (GCL), inner plexiform layer (IPL) and inner nuclear layer (INL) of the retina. Expressed in retinal ganglion cells (RGCs). Expressed in horizontal, bipolar and amacrine cells, but not Mueller glia, of the INL (at protein level). Neuron-specific. Expressed in ganglion cell layer (GCL) and inner plexiform layer (IPL).

It localises to the nucleus. The protein resides in the cell membrane. The catalysed reaction is GTP + H2O = GDP + phosphate + H(+). Its activity is regulated as follows. Alternates between an inactive form bound to GDP and an active form bound to GTP. Binds and exchanges GTP and GDP. Binds and modulates the activation of POU4F1 as gene expression regulator. This is GTP-binding protein Rit2 (Rit2) from Mus musculus (Mouse).